We begin with the raw amino-acid sequence, 965 residues long: Glycine dehydrogenase (decarboxylating) 1 (965 aa).

Lys713 is modified (N6-(pyridoxal phosphate)lysine).

This sequence belongs to the GcvP family. As to quaternary structure, the glycine cleavage system is composed of four proteins: P, T, L and H. It depends on pyridoxal 5'-phosphate as a cofactor.

The enzyme catalyses N(6)-[(R)-lipoyl]-L-lysyl-[glycine-cleavage complex H protein] + glycine + H(+) = N(6)-[(R)-S(8)-aminomethyldihydrolipoyl]-L-lysyl-[glycine-cleavage complex H protein] + CO2. Its function is as follows. The glycine cleavage system catalyzes the degradation of glycine. The P protein binds the alpha-amino group of glycine through its pyridoxal phosphate cofactor; CO(2) is released and the remaining methylamine moiety is then transferred to the lipoamide cofactor of the H protein. This chain is Glycine dehydrogenase (decarboxylating) 1, found in Colwellia psychrerythraea (strain 34H / ATCC BAA-681) (Vibrio psychroerythus).